The chain runs to 145 residues: MEGNLLVIDKRVLPEVFEKVINAKRLLKEGKVKEITEATKQAGISRSVYYKYKDYIFEFAETLQGRKVIFNMVVTHEKGVLSSVLNILSDVGGNILTIDQGLPIHGLAHVSFTIDISTMKCDIKEMLNEIELVHGVEKVEFVAME.

The region spanning 69 to 144 is the ACT domain; it reads IFNMVVTHEK…GVEKVEFVAM (76 aa).

The protein belongs to the UPF0735 family.

The chain is UPF0735 ACT domain-containing protein CPR_1404 from Clostridium perfringens (strain SM101 / Type A).